A 742-amino-acid polypeptide reads, in one-letter code: Two-component response regulator-like PRR37 (742 aa).

Residues 63 to 181 (KVLLVDSDDS…ELKNLWQHVW (119 aa)) form the Response regulatory domain. Over residues 186–195 (SSSGSGSESG) the composition is skewed to low complexity. 6 disordered regions span residues 186–249 (SSSG…SWTK), 290–346 (PCTS…PLQN), 375–402 (DAQQ…NRDN), 478–570 (MKSN…VQSN), 590–671 (NGGS…GNDM), and 697–742 (NFGK…AADR). Over residues 236–248 (DNGSGTQAQSSWT) the composition is skewed to polar residues. Basic and acidic residues predominate over residues 299–313 (KQKETNDDFKGKDLE). Residues 318–330 (RNLNTAYQSSPNE) show a composition bias toward polar residues. Positions 331–341 (RSIKPTDRRNE) are enriched in basic and acidic residues. Positions 380 to 390 (ARATNAPNCSS) are enriched in polar residues. The span at 490 to 502 (GSNGSSNNNDMGS) shows a compositional bias: low complexity. Residues 503-512 (TTKNVVTKPS) are compositionally biased toward polar residues. Over residues 618–634 (NGSNSGSNNGSNGQNGS) the composition is skewed to low complexity. Gly residues predominate over residues 656 to 667 (GPGGGNGSGSGS). The 43-residue stretch at 682-724 (RVAAVIKFRQKRKERNFGKKVRYQSRKRLAEQRPRVRGQFVRQ) folds into the CCT domain. Residues 697–708 (NFGKKVRYQSRK) are compositionally biased toward basic residues. The segment covering 719-731 (GQFVRQAVQDQQQ) has biased composition (low complexity).

It belongs to the ARR-like family.

It is found in the nucleus. Controls photoperiodic flowering response. Seems to be one of the component of the circadian clock. Expression of several members of the ARR-like family is controlled by circadian rhythm. The particular coordinated sequential expression of PRR73, PRR37, PRR95, PRR59 and PPR1 result to circadian waves that may be at the basis of the endogenous circadian clock. In Oryza sativa subsp. indica (Rice), this protein is Two-component response regulator-like PRR37 (PRR37).